Here is a 241-residue protein sequence, read N- to C-terminus: Homeobox protein TGIF2LX (241 aa).

Disordered stretches follow at residues 1-56 (MEAA…PKGY) and 115-213 (RHGN…EYPD). The segment covering 21–39 (AKTQSPAQDTSTVSRNSAD) has biased composition (polar residues). A DNA-binding region (homeobox; TALE-type) is located at residues 48 to 111 (EHTKKPKGYL…INARRRILPD (64 aa)).

The protein belongs to the TALE/TGIF homeobox family.

It localises to the nucleus. Its function is as follows. May have a transcription role in testis. This is Homeobox protein TGIF2LX (TGIF2LX) from Hylobates lar (Lar gibbon).